We begin with the raw amino-acid sequence, 216 residues long: Transmembrane protein 163a (216 aa).

Topologically, residues 1–15 (MRLKPHEAQSYRKKA) are cytoplasmic. The helical transmembrane segment at 16-36 (LWVSWISIVVTLILAVAGFTV) threads the bilayer. At 37-43 (SFMRHSA) the chain is on the extracellular side. Residues 44-64 (SAFGFAFDATLDVLSSIIVLW) form a helical membrane-spanning segment. Residues 65–77 (RYSNAAAVHSAHR) lie on the Cytoplasmic side of the membrane. Residues 78 to 98 (EYIACVILGVIFILSSLCILG) traverse the membrane as a helical segment. Over 99–114 (KAIHDLATKLLPEVDD) the chain is Extracellular. Residues 115–135 (FLFSVSIVSGLMCVILAVAKF) form a helical membrane-spanning segment. At 136–144 (MLGRILTSR) the chain is on the cytoplasmic side. Residues 145 to 165 (ALITDGFNSMVGGIMGFSILI) form a helical membrane-spanning segment. Over 166 to 182 (SAEVFRHYPNVWYLDGT) the chain is Extracellular. The helical transmembrane segment at 183 to 203 (IGILIGLVIQAYGVKLLVDMI) threads the bilayer. The Cytoplasmic segment spans residues 204-216 (PRVRQTRNYERFE).

Belongs to the TMEM163 family.

It is found in the cytoplasmic vesicle. Its subcellular location is the secretory vesicle. The protein localises to the synaptic vesicle membrane. It localises to the early endosome membrane. The protein resides in the late endosome membrane. It is found in the lysosome membrane. Its subcellular location is the cell membrane. The enzyme catalyses Zn(2+)(in) = Zn(2+)(out). In terms of biological role, zinc ion transporter that mediates zinc efflux and plays a crucial role in intracellular zinc homeostasis. Binds the divalent cations Zn(2+), Ni(2+), and to a minor extent Cu(2+). Is a functional modulator of P2X purinoceptors, including P2RX1, P2RX3, P2RX4 and P2RX7. Plays a role in central nervous system development and is required for myelination, and survival and proliferation of oligodendrocytes. This is Transmembrane protein 163a from Danio rerio (Zebrafish).